We begin with the raw amino-acid sequence, 240 residues long: Homeobox protein goosecoid (240 aa).

Positions 146–205 (KRRHRTIFTDEQLEALENLFQETKYPDVGTREQLARKVHLREEKVEVWFKNRRAKWRRQK) form a DNA-binding region, homeobox. Residues 199 to 240 (AKWRRQKRSSSEESENSQKWNKSTKTTSEKIEEGKSDVDSDS) are disordered. Positions 225–240 (TSEKIEEGKSDVDSDS) are enriched in basic and acidic residues.

This sequence belongs to the paired homeobox family. Bicoid subfamily.

The protein resides in the nucleus. The protein is Homeobox protein goosecoid (gsc) of Danio rerio (Zebrafish).